We begin with the raw amino-acid sequence, 901 residues long: Dipeptidyl-aminopeptidase B (901 aa).

The span at 1 to 22 shows a compositional bias: low complexity; sequence MSSPRPSTSSTSSDSGLSVDTT. The segment at 1-67 is disordered; that stretch reads MSSPRPSTSS…EPFLPSAKKQ (67 aa). Residues 1–76 lie on the Cytoplasmic side of the membrane; the sequence is MSSPRPSTSS…QAASGSRTSR (76 aa). The chain crosses the membrane as a helical; Signal-anchor for type II membrane protein span at residues 77 to 97; that stretch reads LIWGLVILCVAGWLWGLVLFV. Residues 98 to 901 lie on the Vacuolar side of the membrane; sequence TQNRSAQQSV…VKRSLPMLVN (804 aa). Asn334 and Asn625 each carry an N-linked (GlcNAc...) asparagine glycan. The Charge relay system role is filled by Ser739. Asn793 is a glycosylation site (N-linked (GlcNAc...) asparagine). Active-site charge relay system residues include Asp816 and His849.

Belongs to the peptidase S9B family.

The protein localises to the vacuole membrane. The enzyme catalyses Release of an N-terminal dipeptide, Xaa-Yaa-|-Zaa-, from a polypeptide, preferentially when Yaa is Pro, provided Zaa is neither Pro nor hydroxyproline.. In terms of biological role, type IV dipeptidyl-peptidase which removes N-terminal dipeptides sequentially from polypeptides having unsubstituted N-termini provided that the penultimate residue is proline. This is Dipeptidyl-aminopeptidase B (dapB) from Aspergillus niger.